An 88-amino-acid polypeptide reads, in one-letter code: Long neurotoxin 20 (88 aa).

Residues methionine 1–serine 21 form the signal peptide. 5 disulfides stabilise this stretch: cysteine 24–cysteine 42, cysteine 35–cysteine 63, cysteine 48–cysteine 52, cysteine 67–cysteine 78, and cysteine 79–cysteine 84.

It belongs to the three-finger toxin family. Long-chain subfamily. Type II alpha-neurotoxin sub-subfamily. In terms of tissue distribution, expressed by the venom gland.

The protein resides in the secreted. Functionally, binds with high affinity to muscular (alpha-1/CHRNA1) and neuronal (alpha-7/CHRNA7) nicotinic acetylcholine receptor (nAChR) and inhibits acetylcholine from binding to the receptor, thereby impairing neuromuscular and neuronal transmission. This is Long neurotoxin 20 from Drysdalia coronoides (White-lipped snake).